Here is a 33-residue protein sequence, read N- to C-terminus: Toxin BcV (33 aa).

The cysteines at positions 6 and 30 are disulfide-linked.

The protein localises to the secreted. Its subcellular location is the nematocyst. Potently and reversibly blocks mammalian Kv11/KCNH/ERG voltage-gated potassium channels. Acts as a gating-modifier toxin that shifts the voltage-dependence of ERG activation in the positive direction and suppresses its current amplitudes elicited by strong depolarizing pulses that maximally activate the channels. In Bunodosoma caissarum (Sea anemone), this protein is Toxin BcV.